The chain runs to 141 residues: Ribonuclease VapC16 (141 aa).

Asp99 contacts Mg(2+). The disordered stretch occupies residues 99–141 (DHAHTAHRRASGSPSTSIRPCAHRPGTAAWPDDHHRRRPVSCL).

This sequence belongs to the PINc/VapC protein family. Requires Mg(2+) as cofactor.

Its function is as follows. Toxic component of a type II toxin-antitoxin (TA) system. An RNase. The cognate antitoxin is VapB16. In Mycobacterium tuberculosis (strain ATCC 25618 / H37Rv), this protein is Ribonuclease VapC16.